The sequence spans 379 residues: Putative 8-amino-7-oxononanoate synthase (379 aa).

A substrate-binding site is contributed by R21. Residue 97-98 (GY) coordinates pyridoxal 5'-phosphate. H122 serves as a coordination point for substrate. Residues S169, 194-197 (DDAH), and 223-226 (TLSK) each bind pyridoxal 5'-phosphate. K226 carries the N6-(pyridoxal phosphate)lysine modification. T340 provides a ligand contact to substrate.

The protein belongs to the class-II pyridoxal-phosphate-dependent aminotransferase family. BioF subfamily. In terms of assembly, homodimer. Pyridoxal 5'-phosphate is required as a cofactor.

It carries out the reaction 6-carboxyhexanoyl-[ACP] + L-alanine + H(+) = (8S)-8-amino-7-oxononanoate + holo-[ACP] + CO2. The protein operates within cofactor biosynthesis; biotin biosynthesis. In terms of biological role, catalyzes the decarboxylative condensation of pimeloyl-[acyl-carrier protein] and L-alanine to produce 8-amino-7-oxononanoate (AON), [acyl-carrier protein], and carbon dioxide. In Bacillus licheniformis (strain ATCC 14580 / DSM 13 / JCM 2505 / CCUG 7422 / NBRC 12200 / NCIMB 9375 / NCTC 10341 / NRRL NRS-1264 / Gibson 46), this protein is Putative 8-amino-7-oxononanoate synthase (bioF).